Here is a 495-residue protein sequence, read N- to C-terminus: ATP-NADH kinase YEF1 (495 aa).

The tract at residues 442-480 is disordered; the sequence is KYRLDSSKNGNDTISNPLESSCISSDAQDEERKSVTETE. Residues 448–467 show a composition bias toward polar residues; that stretch reads SKNGNDTISNPLESSCISSD.

This sequence belongs to the NAD kinase family. As to quaternary structure, homooctamer. Requires Mg(2+) as cofactor. Mn(2+) serves as cofactor. Co(2+) is required as a cofactor. It depends on Ca(2+) as a cofactor.

It carries out the reaction NADH + ATP = ADP + NADPH + H(+). ATP-NADH kinase with a low phosphorylation activity of both NADH and NAD(+) to produce NADP and NADPH by using ATP. UTR1 is responsible for essentially all of the NAD/NADH kinase activity resident in the cytoplasm, whereas POS5 is responsible for all mitochondrial NAD/NADH kinase activity and consequent mitochondrial genome maintenance. YEF1 can substitute for UTR1 when overexpressed. This chain is ATP-NADH kinase YEF1 (YEF1), found in Saccharomyces cerevisiae (strain ATCC 204508 / S288c) (Baker's yeast).